The chain runs to 502 residues: Probable cytochrome P450 28d1 (502 aa).

Position 446 (C446) interacts with heme.

This sequence belongs to the cytochrome P450 family. Requires heme as cofactor.

It localises to the endoplasmic reticulum membrane. The protein resides in the microsome membrane. Its function is as follows. May be involved in the metabolism of insect hormones and in the breakdown of synthetic insecticides. The polypeptide is Probable cytochrome P450 28d1 (Cyp28d1) (Drosophila melanogaster (Fruit fly)).